The primary structure comprises 352 residues: UDP-N-acetylglucosamine--N-acetylmuramyl-(pentapeptide) pyrophosphoryl-undecaprenol N-acetylglucosamine transferase (352 aa).

UDP-N-acetyl-alpha-D-glucosamine-binding positions include 14 to 16 (TGG), N124, R164, S185, and Q285.

This sequence belongs to the glycosyltransferase 28 family. MurG subfamily.

The protein resides in the cell inner membrane. It carries out the reaction di-trans,octa-cis-undecaprenyl diphospho-N-acetyl-alpha-D-muramoyl-L-alanyl-D-glutamyl-meso-2,6-diaminopimeloyl-D-alanyl-D-alanine + UDP-N-acetyl-alpha-D-glucosamine = di-trans,octa-cis-undecaprenyl diphospho-[N-acetyl-alpha-D-glucosaminyl-(1-&gt;4)]-N-acetyl-alpha-D-muramoyl-L-alanyl-D-glutamyl-meso-2,6-diaminopimeloyl-D-alanyl-D-alanine + UDP + H(+). Its pathway is cell wall biogenesis; peptidoglycan biosynthesis. Functionally, cell wall formation. Catalyzes the transfer of a GlcNAc subunit on undecaprenyl-pyrophosphoryl-MurNAc-pentapeptide (lipid intermediate I) to form undecaprenyl-pyrophosphoryl-MurNAc-(pentapeptide)GlcNAc (lipid intermediate II). This is UDP-N-acetylglucosamine--N-acetylmuramyl-(pentapeptide) pyrophosphoryl-undecaprenol N-acetylglucosamine transferase from Chlamydia trachomatis serovar L2 (strain ATCC VR-902B / DSM 19102 / 434/Bu).